Here is a 370-residue protein sequence, read N- to C-terminus: Dihydrolipoyllysine-residue acetyltransferase component of acetoin cleaving system (370 aa).

The Lipoyl-binding domain maps to 4–79; it reads IHTLTMPKWG…PVGALLAVVV (76 aa). Position 45 is an N6-lipoyllysine (K45). An AB hydrolase-1 domain is found at 135 to 355; the sequence is PLVLVHGFGG…EAGHMVQMEA (221 aa).

(R)-lipoate serves as cofactor.

The enzyme catalyses N(6)-[(R)-dihydrolipoyl]-L-lysyl-[protein] + acetyl-CoA = N(6)-[(R)-S(8)-acetyldihydrolipoyl]-L-lysyl-[protein] + CoA. It participates in ketone degradation; acetoin degradation. The sequence is that of Dihydrolipoyllysine-residue acetyltransferase component of acetoin cleaving system (acoC) from Pseudomonas putida (Arthrobacter siderocapsulatus).